Here is a 474-residue protein sequence, read N- to C-terminus: MIILKRLFSNMSILQPPEVVRGMTKLEKEAFRMPVDFPVIEIEARDAGIVGRRVRLEPYLIGHKLKPLKNLVDSEKDGKKYLVFHPDKVQEDETRFKILELLKRELGNEKLLDWTTLSKDLTFENWDAKSIFKAVLPVGIDYSSYTQTGHIIHCNFADEILPFRFIIAEVLLDKVNNCKTVVQKGNIITNVYRNLDLELLAGEDNYVTEVKETGLRFKMDFSKVYWNSRLSHEHERVSGMFNTQSLVYDACCGIGPFVLPATLKRKPKRVVANDLNPESVKWLKVNVGLNKIKEERIEIHNMDAKMFIKENVADDVVRLMLEESTAGEFENEVPKPMSEVHVVMNLPAYAVNFLPAFRGALSRFKDEIEKVPLDKRYKWNVYCYLFAKSHVDVPDSWYEDEARRMCDEKTKWERSLVVKCHNVRTVSSRKEMFCAQLELPYEFLLAEPFPDEPEAQCESEEAEEPSSKRIKVDT.

S-adenosyl-L-methionine contacts are provided by residues H234, 274 to 275 (DL), 303 to 304 (DA), and N345. Positions 452-464 (EPEAQCESEEAEE) are enriched in acidic residues. Residues 452–474 (EPEAQCESEEAEEPSSKRIKVDT) form a disordered region. Basic and acidic residues predominate over residues 465 to 474 (PSSKRIKVDT).

This sequence belongs to the class I-like SAM-binding methyltransferase superfamily. TRM5/TYW2 family. As to quaternary structure, monomer.

Its subcellular location is the mitochondrion matrix. The protein resides in the nucleus. The protein localises to the cytoplasm. It catalyses the reaction guanosine(37) in tRNA + S-adenosyl-L-methionine = N(1)-methylguanosine(37) in tRNA + S-adenosyl-L-homocysteine + H(+). Functionally, specifically methylates the N1 position of guanosine-37 in various cytoplasmic and mitochondrial tRNAs. Methylation is not dependent on the nature of the nucleoside 5' of the target nucleoside. This is the first step in the biosynthesis of wybutosine (yW), a modified base adjacent to the anticodon of tRNAs and required for accurate decoding. This is tRNA (guanine(37)-N(1))-methyltransferase from Caenorhabditis elegans.